The following is a 185-amino-acid chain: Large ribosomal subunit protein uL22 (185 aa).

A disordered region spans residues 157 to 185 (VAAPSPEEDAPKKKQSKKKMARQKLMQRD). Positions 169–178 (KKQSKKKMAR) are enriched in basic residues.

It belongs to the universal ribosomal protein uL22 family.

The sequence is that of Large ribosomal subunit protein uL22 (RpL17) from Ixodes scapularis (Black-legged tick).